Reading from the N-terminus, the 458-residue chain is SH2 domain-containing protein 7 (458 aa).

One can recognise an SH2 domain in the interval 51–142; the sequence is WFHGFITRKQ…PFGETLAAAC (92 aa). Disordered stretches follow at residues 204 to 235 and 267 to 326; these read RSVS…SPAG and AGSL…TLGS. Residues 278–288 show a composition bias toward basic and acidic residues; it reads PSGKLSDEDQN. Positions 304–326 are enriched in polar residues; sequence QGSTMPYTSLGFSLPPSSETLGS.

The chain is SH2 domain-containing protein 7 (Sh2d7) from Mus musculus (Mouse).